The primary structure comprises 154 residues: Myoglobin (154 aa).

The 147-residue stretch at 2–148 folds into the Globin domain; the sequence is GLSDGEWQLV…FRNDMAAKYK (147 aa). The residue at position 4 (Ser-4) is a Phosphoserine. His-65 contributes to the nitrite binding site. Position 65 (His-65) interacts with O2. Position 68 is a phosphothreonine (Thr-68). His-94 is a heme b binding site.

Belongs to the globin family. As to quaternary structure, monomeric.

It localises to the cytoplasm. The protein localises to the sarcoplasm. The catalysed reaction is Fe(III)-heme b-[protein] + nitric oxide + H2O = Fe(II)-heme b-[protein] + nitrite + 2 H(+). It carries out the reaction H2O2 + AH2 = A + 2 H2O. In terms of biological role, monomeric heme protein which primary function is to store oxygen and facilitate its diffusion within muscle tissues. Reversibly binds oxygen through a pentacoordinated heme iron and enables its timely and efficient release as needed during periods of heightened demand. Depending on the oxidative conditions of tissues and cells, and in addition to its ability to bind oxygen, it also has a nitrite reductase activity whereby it regulates the production of bioactive nitric oxide. Under stress conditions, like hypoxia and anoxia, it also protects cells against reactive oxygen species thanks to its pseudoperoxidase activity. In Saimiri sciureus (Common squirrel monkey), this protein is Myoglobin (MB).